We begin with the raw amino-acid sequence, 281 residues long: Pantothenate synthetase (281 aa).

Residue 30 to 37 participates in ATP binding; that stretch reads MGNLHLGH. Catalysis depends on histidine 37, which acts as the Proton donor. Glutamine 61 serves as a coordination point for (R)-pantoate. Beta-alanine is bound at residue glutamine 61. 149 to 152 contributes to the ATP binding site; sequence GRKD. Residue glutamine 155 participates in (R)-pantoate binding. Residues isoleucine 178 and 186 to 189 each bind ATP; that span reads MSSR.

It belongs to the pantothenate synthetase family. As to quaternary structure, homodimer.

It localises to the cytoplasm. It carries out the reaction (R)-pantoate + beta-alanine + ATP = (R)-pantothenate + AMP + diphosphate + H(+). It participates in cofactor biosynthesis; (R)-pantothenate biosynthesis; (R)-pantothenate from (R)-pantoate and beta-alanine: step 1/1. Catalyzes the condensation of pantoate with beta-alanine in an ATP-dependent reaction via a pantoyl-adenylate intermediate. This chain is Pantothenate synthetase, found in Shewanella sediminis (strain HAW-EB3).